The sequence spans 1544 residues: Lysine-specific demethylase 5B (1544 aa).

Residues 32–73 (CPVFEPSWEEFADPFAFIHKIRPIAEQTGICKVRPPPDWQPP) enclose the JmjN domain. An ARID domain is found at 97-187 (TRVKLNFLDQ…ILNPYNLFLS (91 aa)). Residues Lys-148, Lys-204, Lys-209, Lys-242, Lys-274, and Lys-278 each participate in a glycyl lysine isopeptide (Lys-Gly) (interchain with G-Cter in SUMO2) cross-link. The interval 201-230 (TDTKDKEYKPHDIPQRQSVQPSETCPPARR) is disordered. The span at 202–214 (DTKDKEYKPHDIP) shows a compositional bias: basic and acidic residues. The PHD-type 1 zinc-finger motif lies at 309 to 359 (LYVCLLCGSGNDEDRLLLCDGCDDSYHTFCLIPPLHDVPKGDWRCPKCLAQ). Tyr-425 contacts 2-oxoglutarate. The region spanning 453 to 619 (EYLDSGWNLN…LGRQCVEHYR (167 aa)) is the JmjC domain. Fe cation is bound by residues His-499 and Glu-501. Residues Ser-507, Asn-509, and Lys-517 each contribute to the 2-oxoglutarate site. Residue His-587 coordinates Fe cation. The C5HC2 zinc-finger motif lies at 692–744 (CVKCKTTCFMSAISCSCKPGLLVCLHHVKELCSCPPYKYKLRYRYTLDDLYPM). A Glycyl lysine isopeptide (Lys-Gly) (interchain with G-Cter in SUMO2) cross-link involves residue Lys-769. Lys-832 is subject to N6-acetyllysine. Ser-986 carries the phosphoserine modification. The PHD-type 2 zinc finger occupies 1176–1224 (IKICLCQKAPAAPMIQCELCRDAFHTSCVAVPSISQGLRIWLCPHCRRS). Ser-1328 bears the Phosphoserine mark. The segment at 1374–1400 (PSPAQQTDRSSPVRPSSEKNDCCRGKR) is disordered. Polar residues predominate over residues 1376-1387 (PAQQTDRSSPVR). Over residues 1389 to 1400 (SSEKNDCCRGKR) the composition is skewed to basic and acidic residues. Lys-1450 is covalently cross-linked (Glycyl lysine isopeptide (Lys-Gly) (interchain with G-Cter in SUMO2)). Phosphoserine is present on Ser-1456. A PHD-type 3 zinc finger spans residues 1484–1538 (DAICPAVSCLQPEGDEVDWVQCDGSCNQWFHQVCVGVSPEMAEKEDYICVRCTVK).

Belongs to the JARID1 histone demethylase family. Interacts with FOXG1B, PAX9, MYC, MYCN and RB1. Interacts with HDAC1, HDAC4, HDAC5 and HDAC7. Interacts (via PHD-type 1 zinc finger) with histone H3 unmodified at 'Lys-4'; the interaction is inhibited when histone H3 is methylated at 'Arg-2' or 'Lys-4'. Fe(2+) serves as cofactor. As to expression, ubiquitously expressed, with highest levels in testis. Down-regulated in melanoma and glioblastoma. Up-regulated in breast cancer (at protein level).

It is found in the nucleus. The enzyme catalyses N(6),N(6),N(6)-trimethyl-L-lysyl(4)-[histone H3] + 3 2-oxoglutarate + 3 O2 = L-lysyl(4)-[histone H3] + 3 formaldehyde + 3 succinate + 3 CO2. With respect to regulation, several specific inhibitors are being developed and tested. The inhibitor KDOAM-25 inhibits its demethylase activity, resulting to cell cycle arrest in myeloma cells. In terms of biological role, histone demethylase that demethylates 'Lys-4' of histone H3, thereby playing a central role in histone code. Does not demethylate histone H3 'Lys-9' or H3 'Lys-27'. Demethylates trimethylated, dimethylated and monomethylated H3 'Lys-4'. Acts as a transcriptional corepressor for FOXG1B and PAX9. Favors the proliferation of breast cancer cells by repressing tumor suppressor genes such as BRCA1 and HOXA5. In contrast, may act as a tumor suppressor for melanoma. Represses the CLOCK-BMAL1 heterodimer-mediated transcriptional activation of the core clock component PER2. In Homo sapiens (Human), this protein is Lysine-specific demethylase 5B (KDM5B).